Reading from the N-terminus, the 920-residue chain is Isoleucine--tRNA ligase (920 aa).

The 'HIGH' region motif lies at 57–67 (PYANGDIHLGH). Glu-560 contributes to the L-isoleucyl-5'-AMP binding site. The 'KMSKS' region signature appears at 601–605 (KMSKS). Lys-604 contacts ATP. Residues Cys-890, Cys-893, Cys-910, and Cys-913 each contribute to the Zn(2+) site.

This sequence belongs to the class-I aminoacyl-tRNA synthetase family. IleS type 1 subfamily. In terms of assembly, monomer. The cofactor is Zn(2+).

It localises to the cytoplasm. The enzyme catalyses tRNA(Ile) + L-isoleucine + ATP = L-isoleucyl-tRNA(Ile) + AMP + diphosphate. Its function is as follows. Catalyzes the attachment of isoleucine to tRNA(Ile). As IleRS can inadvertently accommodate and process structurally similar amino acids such as valine, to avoid such errors it has two additional distinct tRNA(Ile)-dependent editing activities. One activity is designated as 'pretransfer' editing and involves the hydrolysis of activated Val-AMP. The other activity is designated 'posttransfer' editing and involves deacylation of mischarged Val-tRNA(Ile). The sequence is that of Isoleucine--tRNA ligase from Caldicellulosiruptor saccharolyticus (strain ATCC 43494 / DSM 8903 / Tp8T 6331).